Consider the following 204-residue polypeptide: GTP cyclohydrolase 1 (204 aa).

Residues C93, H96, and C164 each contribute to the Zn(2+) site.

It belongs to the GTP cyclohydrolase I family. Toroid-shaped homodecamer, composed of two pentamers of five dimers.

The catalysed reaction is GTP + H2O = 7,8-dihydroneopterin 3'-triphosphate + formate + H(+). It functions in the pathway cofactor biosynthesis; 7,8-dihydroneopterin triphosphate biosynthesis; 7,8-dihydroneopterin triphosphate from GTP: step 1/1. The polypeptide is GTP cyclohydrolase 1 (Rhizobium meliloti (strain 1021) (Ensifer meliloti)).